The chain runs to 343 residues: 4-hydroxy-2-oxovalerate aldolase (343 aa).

Positions 5–256 (ILLCDPTLRD…ETGIDLYKIL (252 aa)) constitute a Pyruvate carboxyltransferase domain. 13–14 (RD) provides a ligand contact to substrate. Asp-14 is a Mn(2+) binding site. His-17 functions as the Proton acceptor in the catalytic mechanism. Substrate contacts are provided by Ser-168 and His-195. 2 residues coordinate Mn(2+): His-195 and His-197.

The protein belongs to the 4-hydroxy-2-oxovalerate aldolase family. In terms of assembly, interacts with MhpF.

The catalysed reaction is (S)-4-hydroxy-2-oxopentanoate = acetaldehyde + pyruvate. Its pathway is aromatic compound metabolism; 3-phenylpropanoate degradation. Functionally, catalyzes the retro-aldol cleavage of 4-hydroxy-2-oxopentanoate to pyruvate and acetaldehyde. Is involved in the meta-cleavage pathway for the degradation of aromatic compounds. The sequence is that of 4-hydroxy-2-oxovalerate aldolase from Pectobacterium atrosepticum (strain SCRI 1043 / ATCC BAA-672) (Erwinia carotovora subsp. atroseptica).